A 796-amino-acid chain; its full sequence is Endonuclease MutS2 (796 aa).

339–346 (GPNTGGKT) is an ATP binding site. Residues 620–644 (EKLGDTDSSLVSKAKKNRKQHKPSD) form a disordered region. One can recognise a Smr domain in the interval 721-796 (LNIIGKRVDE…DHGVTIVEFK (76 aa)).

Belongs to the DNA mismatch repair MutS family. MutS2 subfamily. In terms of assembly, homodimer. Binds to stalled ribosomes, contacting rRNA.

Endonuclease that is involved in the suppression of homologous recombination and thus may have a key role in the control of bacterial genetic diversity. Functionally, acts as a ribosome collision sensor, splitting the ribosome into its 2 subunits. Detects stalled/collided 70S ribosomes which it binds and splits by an ATP-hydrolysis driven conformational change. Acts upstream of the ribosome quality control system (RQC), a ribosome-associated complex that mediates the extraction of incompletely synthesized nascent chains from stalled ribosomes and their subsequent degradation. Probably generates substrates for RQC. In Lachnoclostridium phytofermentans (strain ATCC 700394 / DSM 18823 / ISDg) (Clostridium phytofermentans), this protein is Endonuclease MutS2.